The primary structure comprises 90 residues: Small ribosomal subunit protein uS15 (90 aa).

It belongs to the universal ribosomal protein uS15 family. As to quaternary structure, part of the 30S ribosomal subunit. Forms a bridge to the 50S subunit in the 70S ribosome, contacting the 23S rRNA.

Functionally, one of the primary rRNA binding proteins, it binds directly to 16S rRNA where it helps nucleate assembly of the platform of the 30S subunit by binding and bridging several RNA helices of the 16S rRNA. Its function is as follows. Forms an intersubunit bridge (bridge B4) with the 23S rRNA of the 50S subunit in the ribosome. This Helicobacter pylori (strain Shi470) protein is Small ribosomal subunit protein uS15.